The primary structure comprises 359 residues: NADH-quinone oxidoreductase subunit H (359 aa).

8 helical membrane-spanning segments follow: residues 19–39 (IGWFPLGLVIVAAIPLVFIAL), 94–114 (FLFVIGPGILFVGSFLAFAVL), 127–147 (VGLFYAVGIVAIEVVGILAAG), 175–195 (IALLCAAMLAGTLSMQQIILM), 202–222 (FLHWFLFTNPIAWLPFLIYFI), 255–275 (FAVIFLAEYGSMFMVSAIISI), 301–321 (VWGAFWIIMKGFFFIFVQMWL), and 337–357 (CWKVLTPFSLVSFVLTAIWVI).

The protein belongs to the complex I subunit 1 family. As to quaternary structure, NDH-1 is composed of 14 different subunits. Subunits NuoA, H, J, K, L, M, N constitute the membrane sector of the complex.

The protein resides in the cell inner membrane. It catalyses the reaction a quinone + NADH + 5 H(+)(in) = a quinol + NAD(+) + 4 H(+)(out). NDH-1 shuttles electrons from NADH, via FMN and iron-sulfur (Fe-S) centers, to quinones in the respiratory chain. The immediate electron acceptor for the enzyme in this species is believed to be ubiquinone. Couples the redox reaction to proton translocation (for every two electrons transferred, four hydrogen ions are translocated across the cytoplasmic membrane), and thus conserves the redox energy in a proton gradient. This subunit may bind ubiquinone. This Chlorobaculum tepidum (strain ATCC 49652 / DSM 12025 / NBRC 103806 / TLS) (Chlorobium tepidum) protein is NADH-quinone oxidoreductase subunit H.